An 844-amino-acid chain; its full sequence is Penicillin-binding protein 1B (844 aa).

Residues 1–10 (MAGNDREPIG) are compositionally biased toward basic and acidic residues. A disordered region spans residues 1–60 (MAGNDREPIGRKGKPTRPVKQKVSRRRYEDDDDYDDYDDYEDEEPMPRKGKGKGKGRKPR). Topologically, residues 1–63 (MAGNDREPIG…GKGRKPRGKR (63 aa)) are cytoplasmic. The span at 11–25 (RKGKPTRPVKQKVSR) shows a compositional bias: basic residues. The segment covering 30–44 (DDDDYDDYDDYEDEE) has biased composition (acidic residues). Residues 48-60 (RKGKGKGKGRKPR) are compositionally biased toward basic residues. The helical; Signal-anchor for type II membrane protein transmembrane segment at 64-87 (GWLWLLLKLAIVFAVLIAIYGVYL) threads the bilayer. The interval 88 to 250 (DQKIRSRIDG…DGISLYSIGR (163 aa)) is membrane association. Residues 88 to 844 (DQKIRSRIDG…GWIKDMFGSN (757 aa)) are Periplasmic-facing. Positions 109–200 (RMVNLEPDMT…QFGFFRLDPR (92 aa)) are uvrB domain 2 homolog. The transglycosylase stretch occupies residues 195 to 367 (FRLDPRLITM…SIYNPWRNPK (173 aa)). Glu233 acts as the Proton donor; for transglycosylase activity in catalysis. A transpeptidase region spans residues 444–736 (SVAQDAAEKA…NNQPTKLYGA (293 aa)). Ser510 (acyl-ester intermediate; for transpeptidase activity) is an active-site residue. A compositionally biased stretch (low complexity) spans 793-825 (LCQQSEMQQQPSGNPFDQSSQPQQQPQQQPAQQ). Positions 793 to 835 (LCQQSEMQQQPSGNPFDQSSQPQQQPQQQPAQQEQKDSDGVAG) are disordered.

It in the N-terminal section; belongs to the glycosyltransferase 51 family. The protein in the C-terminal section; belongs to the transpeptidase family. In terms of assembly, forms a trimeric complex with MipA and MltA. Has also been shown to exist as monomer or homodimer; homodimer of Alpha and Gamma isozymes can be found. Interacts with UvrA, FtsL and FtsN.

It localises to the cell inner membrane. The catalysed reaction is [GlcNAc-(1-&gt;4)-Mur2Ac(oyl-L-Ala-gamma-D-Glu-L-Lys-D-Ala-D-Ala)](n)-di-trans,octa-cis-undecaprenyl diphosphate + beta-D-GlcNAc-(1-&gt;4)-Mur2Ac(oyl-L-Ala-gamma-D-Glu-L-Lys-D-Ala-D-Ala)-di-trans,octa-cis-undecaprenyl diphosphate = [GlcNAc-(1-&gt;4)-Mur2Ac(oyl-L-Ala-gamma-D-Glu-L-Lys-D-Ala-D-Ala)](n+1)-di-trans,octa-cis-undecaprenyl diphosphate + di-trans,octa-cis-undecaprenyl diphosphate + H(+). The enzyme catalyses Preferential cleavage: (Ac)2-L-Lys-D-Ala-|-D-Ala. Also transpeptidation of peptidyl-alanyl moieties that are N-acyl substituents of D-alanine.. It functions in the pathway cell wall biogenesis; peptidoglycan biosynthesis. Its function is as follows. Cell wall formation. Synthesis of cross-linked peptidoglycan from the lipid intermediates. The enzyme has a penicillin-insensitive transglycosylase N-terminal domain (formation of linear glycan strands) and a penicillin-sensitive transpeptidase C-terminal domain (cross-linking of the peptide subunits). The polypeptide is Penicillin-binding protein 1B (mrcB) (Escherichia coli (strain K12)).